A 728-amino-acid polypeptide reads, in one-letter code: 1,4-alpha-glucan branching enzyme GlgB (728 aa).

The Nucleophile role is filled by Asp-405. Glu-458 acts as the Proton donor in catalysis.

This sequence belongs to the glycosyl hydrolase 13 family. GlgB subfamily. As to quaternary structure, monomer.

The catalysed reaction is Transfers a segment of a (1-&gt;4)-alpha-D-glucan chain to a primary hydroxy group in a similar glucan chain.. It participates in glycan biosynthesis; glycogen biosynthesis. Functionally, catalyzes the formation of the alpha-1,6-glucosidic linkages in glycogen by scission of a 1,4-alpha-linked oligosaccharide from growing alpha-1,4-glucan chains and the subsequent attachment of the oligosaccharide to the alpha-1,6 position. The protein is 1,4-alpha-glucan branching enzyme GlgB of Shigella dysenteriae serotype 1 (strain Sd197).